We begin with the raw amino-acid sequence, 311 residues long: MFHHISVMLNETIDYLDIKEDGIYVDCTLGGAGHALYLLNQLNDDGRLIAIDQDTTALDNAKEVLKDHLHKVTFVHSNFRELTDILKNLNIEKVDGIYYDLGVSSPQLDVPERGFSYHHDAKLDMRMDQTQQLSAYEVVNQWPYEALVKIFYRYGEEKFSKQIARRIETHREHQPIETTLELVDIIKEGIPAKARRKGGHPAKRVFQAIRIAVNDELSAFEDSIEQAIELVKVGGRISVITFHSLEDRLCKQMFQEYEKGPDVPRGLPIIPEAYTPKLKRVNRKPITATDTDLDENNRARSAKLRVAEILK.

S-adenosyl-L-methionine-binding positions include Ala-32 to His-34, Asp-52, Phe-79, Asp-100, and Gln-107.

This sequence belongs to the methyltransferase superfamily. RsmH family.

It is found in the cytoplasm. The enzyme catalyses cytidine(1402) in 16S rRNA + S-adenosyl-L-methionine = N(4)-methylcytidine(1402) in 16S rRNA + S-adenosyl-L-homocysteine + H(+). Its function is as follows. Specifically methylates the N4 position of cytidine in position 1402 (C1402) of 16S rRNA. The protein is Ribosomal RNA small subunit methyltransferase H of Staphylococcus haemolyticus (strain JCSC1435).